The chain runs to 347 residues: uncharacterized protein (347 aa).

An N-terminal signal peptide occupies residues 1 to 26 (MQGRVAGSCAPLGLLLVCLHLPGLFA). The span at 41–60 (GTNLPQLGQPSSTGPSNSEH) shows a compositional bias: polar residues. 2 disordered regions span residues 41–110 (GTNL…MDSW) and 148–189 (SGPL…AGGK). The span at 148–157 (SGPLPGESSP) shows a compositional bias: low complexity.

As to quaternary structure, binds to numerous extracellular matrix proteins.

The protein resides in the secreted. Its subcellular location is the extracellular space. The protein localises to the extracellular matrix. This is an uncharacterized protein from Pan troglodytes (Chimpanzee).